We begin with the raw amino-acid sequence, 152 residues long: Putative toxin MJ1304 (152 aa).

In terms of domain architecture, HEPN spans isoleucine 15–valine 135.

In terms of biological role, putative toxin component of a putative type VII toxin-antitoxin (TA) system. Its cognate antitoxin might be MJ1305. In Methanocaldococcus jannaschii (strain ATCC 43067 / DSM 2661 / JAL-1 / JCM 10045 / NBRC 100440) (Methanococcus jannaschii), this protein is Putative toxin MJ1304.